The chain runs to 663 residues: Chaperone protein HtpG (663 aa).

Residues 1–352 (MTKQTLSFQA…SADLPLNVSR (352 aa)) are a; substrate-binding. Basic and acidic residues predominate over residues 218–228 (ELINPSDEKGG). The interval 218-237 (ELINPSDEKGGRQPGGMVKT) is disordered. The b stretch occupies residues 353-595 (ELLQESRDVK…DHGMSTQLAR (243 aa)). Residues 596-663 (MLKQAGQAAP…YVKRVNALLV (68 aa)) are c.

The protein belongs to the heat shock protein 90 family. In terms of assembly, homodimer.

Its subcellular location is the cytoplasm. Molecular chaperone. Has ATPase activity. The polypeptide is Chaperone protein HtpG (Albidiferax ferrireducens (strain ATCC BAA-621 / DSM 15236 / T118) (Rhodoferax ferrireducens)).